Reading from the N-terminus, the 79-residue chain is Small ribosomal subunit protein bS16 (79 aa).

It belongs to the bacterial ribosomal protein bS16 family.

The sequence is that of Small ribosomal subunit protein bS16 from Hahella chejuensis (strain KCTC 2396).